A 131-amino-acid chain; its full sequence is Large ribosomal subunit protein bL12 (131 aa).

This sequence belongs to the bacterial ribosomal protein bL12 family. In terms of assembly, homodimer. Part of the ribosomal stalk of the 50S ribosomal subunit. Forms a multimeric L10(L12)X complex, where L10 forms an elongated spine to which 2 to 4 L12 dimers bind in a sequential fashion. Binds GTP-bound translation factors.

Its function is as follows. Forms part of the ribosomal stalk which helps the ribosome interact with GTP-bound translation factors. Is thus essential for accurate translation. This is Large ribosomal subunit protein bL12 from Prochlorococcus marinus (strain MIT 9515).